Here is a 285-residue protein sequence, read N- to C-terminus: MKNLLEQIQSRLDELNKAERKVAEVILQNPQQATRFSIAALAQAAAVSEPTVNRFCRSFGMSGYPELKIQLAQSLASGAAFVTQAVAEDDGPEAYTRKIFSNTIASLDSAHKLLDPRVIDRAVDLLIQARQIHFFGLGASASVALDAQHKFFRFNLAVSAQADVLMQRMIASVAHTGDLFVVISYTGRTRELVEVAHLARENGASVLGLTAAGSPLARASTLCLDIPLPEDTDIYMPMTSRIVQLTVLDVLATGVTLRRGVDFQPHLRRIKESLVPTRYPLDEDN.

The HTH rpiR-type domain maps to lysine 2–glycine 78. Positions isoleucine 38–arginine 57 form a DNA-binding region, H-T-H motif. In terms of domain architecture, SIS spans alanine 122 to valine 261.

Functionally, involved in regulation of glucose metabolism. Transcriptional repressor of the gap-1 gene and of the edd-glk-gltR-2 and zwf-pgl-eda operons. Acts by binding directly to an inverted pseudopalindromic sequence in the promoter region. The protein is HTH-type transcriptional regulator HexR of Pseudomonas aeruginosa (strain ATCC 15692 / DSM 22644 / CIP 104116 / JCM 14847 / LMG 12228 / 1C / PRS 101 / PAO1).